A 310-amino-acid polypeptide reads, in one-letter code: MNALTAVQNNAVDSGQDYSGFTLIPSAQSPRLLELTFTEQTTKQFLEQVAEWPVQALEYKSFLRFRVGKILDDLCANQLQPLLLKTLLNRAEGALLINAVGIDDVAQADEMVKLATAVAHLIGRSNFDAMSGQYYARFVVKNVDNSDSYLRQPHRVMELHNDGTYVEEITDYVLMMKIDDWEHLDHYFRHPLARRPMRFAAPPSKNVSKDVFHPVFDVDQQGRPVMRYIDQFVQPKDFEEGVWLSELSDAIETSKGILSVPVPVGKFLLINNLFWLHGRDRFTPHPDLRRELMRQRGYFAYATHHYQTHQ.

Positions 160, 162, and 277 each coordinate Fe cation.

The protein belongs to the glutarate hydroxylase family. As to quaternary structure, homotetramer. Requires Fe(2+) as cofactor.

The enzyme catalyses glutarate + 2-oxoglutarate + O2 = (S)-2-hydroxyglutarate + succinate + CO2. It participates in amino-acid degradation. Acts as an alpha-ketoglutarate-dependent dioxygenase catalyzing hydroxylation of glutarate (GA) to L-2-hydroxyglutarate (L2HG). Functions in a L-lysine degradation pathway that proceeds via cadaverine, glutarate and L-2-hydroxyglutarate. This is Glutarate 2-hydroxylase from Shigella flexneri.